The chain runs to 361 residues: Phosphoribosylformylglycinamidine cyclo-ligase (361 aa).

This sequence belongs to the AIR synthase family.

It is found in the cytoplasm. The enzyme catalyses 2-formamido-N(1)-(5-O-phospho-beta-D-ribosyl)acetamidine + ATP = 5-amino-1-(5-phospho-beta-D-ribosyl)imidazole + ADP + phosphate + H(+). It functions in the pathway purine metabolism; IMP biosynthesis via de novo pathway; 5-amino-1-(5-phospho-D-ribosyl)imidazole from N(2)-formyl-N(1)-(5-phospho-D-ribosyl)glycinamide: step 2/2. The polypeptide is Phosphoribosylformylglycinamidine cyclo-ligase (Bartonella henselae (strain ATCC 49882 / DSM 28221 / CCUG 30454 / Houston 1) (Rochalimaea henselae)).